A 309-amino-acid polypeptide reads, in one-letter code: D-alanine--D-alanine ligase (309 aa).

Residues 104 to 306 enclose the ATP-grasp domain; that stretch reads KLLWQSFNLP…YQILVQKILE (203 aa). Residue 137 to 192 participates in ATP binding; sequence ISLLGLPIIVKPNQEGSSIGITIVYSYETLYKACKTAFIFDNSILIEKFIYGEEYT. Aspartate 260, glutamate 273, and asparagine 275 together coordinate Mg(2+).

The protein belongs to the D-alanine--D-alanine ligase family. Mg(2+) serves as cofactor. It depends on Mn(2+) as a cofactor.

Its subcellular location is the cytoplasm. The enzyme catalyses 2 D-alanine + ATP = D-alanyl-D-alanine + ADP + phosphate + H(+). It participates in cell wall biogenesis; peptidoglycan biosynthesis. Functionally, cell wall formation. This Buchnera aphidicola subsp. Baizongia pistaciae (strain Bp) protein is D-alanine--D-alanine ligase.